Consider the following 156-residue polypeptide: ATP synthase subunit b (156 aa).

A helical membrane pass occupies residues 11-31 (AIAFAVFVWFCMKYVWPPLLA).

The protein belongs to the ATPase B chain family. As to quaternary structure, F-type ATPases have 2 components, F(1) - the catalytic core - and F(0) - the membrane proton channel. F(1) has five subunits: alpha(3), beta(3), gamma(1), delta(1), epsilon(1). F(0) has three main subunits: a(1), b(2) and c(10-14). The alpha and beta chains form an alternating ring which encloses part of the gamma chain. F(1) is attached to F(0) by a central stalk formed by the gamma and epsilon chains, while a peripheral stalk is formed by the delta and b chains.

It is found in the cell inner membrane. Its function is as follows. F(1)F(0) ATP synthase produces ATP from ADP in the presence of a proton or sodium gradient. F-type ATPases consist of two structural domains, F(1) containing the extramembraneous catalytic core and F(0) containing the membrane proton channel, linked together by a central stalk and a peripheral stalk. During catalysis, ATP synthesis in the catalytic domain of F(1) is coupled via a rotary mechanism of the central stalk subunits to proton translocation. In terms of biological role, component of the F(0) channel, it forms part of the peripheral stalk, linking F(1) to F(0). This is ATP synthase subunit b from Psychromonas ingrahamii (strain DSM 17664 / CCUG 51855 / 37).